A 483-amino-acid polypeptide reads, in one-letter code: Altronate oxidoreductase (483 aa).

An NAD(+)-binding site is contributed by 18-29; that stretch reads IIQFGEGNFLRA.

Belongs to the mannitol dehydrogenase family. UxaB subfamily.

The enzyme catalyses D-altronate + NAD(+) = keto-D-tagaturonate + NADH + H(+). The protein operates within carbohydrate metabolism; pentose and glucuronate interconversion. The protein is Altronate oxidoreductase of Yersinia pestis.